An 81-amino-acid polypeptide reads, in one-letter code: RNA-binding protein Hfq (81 aa).

A Sm domain is found at 10–69 (DPFLNTLRREHVPVSIYLVNGIKLQGQIESFDQYVVLLRNTVTQMVYKHAISTIVPGRAV).

This sequence belongs to the Hfq family. As to quaternary structure, homohexamer.

RNA chaperone that binds small regulatory RNA (sRNAs) and mRNAs to facilitate mRNA translational regulation in response to envelope stress, environmental stress and changes in metabolite concentrations. Also binds with high specificity to tRNAs. This Variovorax paradoxus (strain S110) protein is RNA-binding protein Hfq.